A 184-amino-acid chain; its full sequence is HVA22-like protein c (184 aa).

Transmembrane regions (helical) follow at residues 13–33, 51–71, and 73–93; these read VLIKNFDVLALPLVTLVYPLY, LTYWVLYALISLFELTFSKPL, and WFPIWPYMKLFGICWLVLPQF.

Belongs to the DP1 family. Predominantly expressed in flower buds and stem.

It is found in the membrane. The polypeptide is HVA22-like protein c (HVA22C) (Arabidopsis thaliana (Mouse-ear cress)).